The following is a 553-amino-acid chain: Pumilio domain-containing protein 5 (553 aa).

8 Pumilio repeats span residues 146–184 (DVVSNGSLIDFAMDRTGVKFLERHFPEDHDNEMHFVLFD), 185–223 (KLTEQGAVFTSLCRSAAGNFIIQKFVEHATLDEQERLVR), 224–260 (KMCDNGLIEMCLDKFACRVVQMSIQKFDVSIAMKLVE), 261–296 (KISSLDFLPLCTDQCAIHVLQKVVKLLPISAWSFFV), 297–335 (KFLCRDDNLMTVCQDKYGCRLVQQTIDKLSDNPKLHCFN), 347–384 (SVARNCFRLSSNEFANYVVQYVIKSSGVMEMYRDTIIE), 386–421 (CLLRNILSMSQDKYASHVVEGAFLFAPPLLLSEMMD), and 432–472 (ETNR…KMVA). Positions 499–514 (FSSGKKIIESLQKLNV) are RNA-binding.

Detected in differentiating oocytes with highest levels observed in developing ooctyes in the distal portion of the proximal gonad.

Its subcellular location is the cytoplasm. It localises to the P-body. RNA-binding protein that binds to the consensus sequence 5'-CUCUGUAUCUUGU-3' in mRNA 3'-UTRs and modulates mRNA expression and stability. Functions redundantly with puf-6 and puf-7 in oocyte formation and organization, early embryonic cell divisions, and repression of expression of glp-1 and other maternal mRNAs in late oogenesis. This Caenorhabditis elegans protein is Pumilio domain-containing protein 5.